The primary structure comprises 163 residues: Phosphopantetheine adenylyltransferase (163 aa).

Thr10 contributes to the substrate binding site. Residues 10–11 (TF) and His18 contribute to the ATP site. Substrate is bound by residues Lys42, Leu74, and Arg88. Residues 89 to 91 (GLR), Glu99, and 124 to 130 (NSFISST) contribute to the ATP site.

This sequence belongs to the bacterial CoaD family. Homohexamer. The cofactor is Mg(2+).

It localises to the cytoplasm. It carries out the reaction (R)-4'-phosphopantetheine + ATP + H(+) = 3'-dephospho-CoA + diphosphate. It functions in the pathway cofactor biosynthesis; coenzyme A biosynthesis; CoA from (R)-pantothenate: step 4/5. Its function is as follows. Reversibly transfers an adenylyl group from ATP to 4'-phosphopantetheine, yielding dephospho-CoA (dPCoA) and pyrophosphate. This chain is Phosphopantetheine adenylyltransferase, found in Shewanella baltica (strain OS223).